A 502-amino-acid polypeptide reads, in one-letter code: Beta-amyrin 28-monooxygenase CYP716A379 (502 aa).

A helical; Signal-anchor for type II membrane protein transmembrane segment spans residues L3 to V23. 2 N-linked (GlcNAc...) asparagine glycosylation sites follow: N88 and N181. C444 is a heme binding site.

Belongs to the cytochrome P450 family. Heme is required as a cofactor. Mainly expressed in flowers and flower buds, to a lesser extent in young leaves and, at low levels, in old leaves, stems and roots.

The protein resides in the membrane. The enzyme catalyses beta-amyrin + 3 reduced [NADPH--hemoprotein reductase] + 3 O2 = oleanolate + 3 oxidized [NADPH--hemoprotein reductase] + 4 H2O + 4 H(+). It participates in secondary metabolite biosynthesis; terpenoid biosynthesis. Functionally, component of the oleanane-type triterpene saponins (e.g. saponarioside A and saponarioside B) biosynthetic pathway, leading to the production of natural products with detergent properties used as traditional sources of soap. An oxidoreductase that facilitates the oxidation of the methyl group to a carboxyl group at the C-28 position of beta-amyrin, resulting in the formation of oleanolic acid. Catalyzes also the subsequent oxidation of the methyl group to a&lt; carboxyl group at the C-16 alpha position of oleanolic acid, resulting in the formation of echinocystic acid. This chain is Beta-amyrin 28-monooxygenase CYP716A379, found in Saponaria officinalis (Common soapwort).